The primary structure comprises 247 residues: Agamous-like MADS-box protein FUL-L (247 aa).

The 61-residue stretch at 1–61 folds into the MADS-box domain; the sequence is MGRGRVQLKR…GKLFEYSSDS (61 aa). Positions 88–178 constitute a K-box domain; sequence QGNWSMDYPK…AKKVKEKEKV (91 aa). Residues 224–247 are disordered; sequence EDGAEARPSPNTLMPPWMLRHVNE.

Expressed in tendrils and flowers.

The protein localises to the nucleus. Its function is as follows. Probable transcription factor involved in flower development. The polypeptide is Agamous-like MADS-box protein FUL-L (Vitis vinifera (Grape)).